The sequence spans 300 residues: uncharacterized protein (300 aa).

Residue Tyr53 is the Proton donor of the active site. An NADP(+)-binding site is contributed by 210-220 (SPLAGGKVFTE).

The protein belongs to the aldo/keto reductase family. Aldo/keto reductase 2 subfamily.

This is an uncharacterized protein from Bacillus subtilis (strain 168).